The chain runs to 55 residues: Large ribosomal subunit protein bL33 (55 aa).

It belongs to the bacterial ribosomal protein bL33 family.

The protein is Large ribosomal subunit protein bL33 of Escherichia coli (strain K12 / DH10B).